The following is a 335-amino-acid chain: Matrix protein (335 aa).

This sequence belongs to the morbillivirus/respirovirus/rubulavirus M protein family.

The protein resides in the virion. The M protein has a crucial role in virus assembly and interacts with the RNP complex as well as with the viral membrane. The protein is Matrix protein (M) of Ailuropoda melanoleuca (Giant panda).